Reading from the N-terminus, the 741-residue chain is Methionine--tRNA ligase (741 aa).

The 'HIGH' region signature appears at P11–H21. Zn(2+) contacts are provided by C143, C146, C156, and C159. Residues K345–S349 carry the 'KMSKS' region motif. Residue T348 participates in ATP binding. Residues E641–R741 form the tRNA-binding domain.

Belongs to the class-I aminoacyl-tRNA synthetase family. MetG type 1 subfamily. Homodimer. Zn(2+) is required as a cofactor.

The protein localises to the cytoplasm. It catalyses the reaction tRNA(Met) + L-methionine + ATP = L-methionyl-tRNA(Met) + AMP + diphosphate. Its function is as follows. Is required not only for elongation of protein synthesis but also for the initiation of all mRNA translation through initiator tRNA(fMet) aminoacylation. This Thermococcus kodakarensis (strain ATCC BAA-918 / JCM 12380 / KOD1) (Pyrococcus kodakaraensis (strain KOD1)) protein is Methionine--tRNA ligase.